The primary structure comprises 179 residues: 6,7-dimethyl-8-ribityllumazine synthase (179 aa).

5-amino-6-(D-ribitylamino)uracil-binding positions include W13, 45–47, and 68–70; these read AVE and VVI. Residue 73-74 coordinates (2S)-2-hydroxy-3-oxobutyl phosphate; that stretch reads DT. H76 serves as the catalytic Proton donor. Residue F101 participates in 5-amino-6-(D-ribitylamino)uracil binding. Position 115 (R115) interacts with (2S)-2-hydroxy-3-oxobutyl phosphate. Positions 157–179 are disordered; the sequence is AKAAKKPAKAAAKTQKKKKKVRK.

This sequence belongs to the DMRL synthase family.

The catalysed reaction is (2S)-2-hydroxy-3-oxobutyl phosphate + 5-amino-6-(D-ribitylamino)uracil = 6,7-dimethyl-8-(1-D-ribityl)lumazine + phosphate + 2 H2O + H(+). It functions in the pathway cofactor biosynthesis; riboflavin biosynthesis; riboflavin from 2-hydroxy-3-oxobutyl phosphate and 5-amino-6-(D-ribitylamino)uracil: step 1/2. Functionally, catalyzes the formation of 6,7-dimethyl-8-ribityllumazine by condensation of 5-amino-6-(D-ribitylamino)uracil with 3,4-dihydroxy-2-butanone 4-phosphate. This is the penultimate step in the biosynthesis of riboflavin. This Bdellovibrio bacteriovorus (strain ATCC 15356 / DSM 50701 / NCIMB 9529 / HD100) protein is 6,7-dimethyl-8-ribityllumazine synthase.